Consider the following 143-residue polypeptide: Nucleoside diphosphate kinase (143 aa).

6 residues coordinate ATP: lysine 11, phenylalanine 59, arginine 87, threonine 93, arginine 104, and asparagine 114. The active-site Pros-phosphohistidine intermediate is the histidine 117.

Belongs to the NDK family. As to quaternary structure, homotetramer. Mg(2+) serves as cofactor.

The protein resides in the cytoplasm. The enzyme catalyses a 2'-deoxyribonucleoside 5'-diphosphate + ATP = a 2'-deoxyribonucleoside 5'-triphosphate + ADP. It carries out the reaction a ribonucleoside 5'-diphosphate + ATP = a ribonucleoside 5'-triphosphate + ADP. Its function is as follows. Major role in the synthesis of nucleoside triphosphates other than ATP. The ATP gamma phosphate is transferred to the NDP beta phosphate via a ping-pong mechanism, using a phosphorylated active-site intermediate. The chain is Nucleoside diphosphate kinase from Shewanella oneidensis (strain ATCC 700550 / JCM 31522 / CIP 106686 / LMG 19005 / NCIMB 14063 / MR-1).